The primary structure comprises 347 residues: NADH-quinone oxidoreductase subunit H (347 aa).

Helical transmembrane passes span 13–33, 82–102, 115–135, 161–181, 198–218, 248–268, 283–303, and 321–341; these read LLIL…VAYI, GVFL…WAVI, VGIL…IMGG, IGFV…SDIV, FLDW…ISAL, FLLF…LATI, FTWV…FFGI, and LGWK…AAFL.

It belongs to the complex I subunit 1 family. In terms of assembly, NDH-1 is composed of 14 different subunits. Subunits NuoA, H, J, K, L, M, N constitute the membrane sector of the complex.

The protein localises to the cell inner membrane. The enzyme catalyses a quinone + NADH + 5 H(+)(in) = a quinol + NAD(+) + 4 H(+)(out). Functionally, NDH-1 shuttles electrons from NADH, via FMN and iron-sulfur (Fe-S) centers, to quinones in the respiratory chain. The immediate electron acceptor for the enzyme in this species is believed to be ubiquinone. Couples the redox reaction to proton translocation (for every two electrons transferred, four hydrogen ions are translocated across the cytoplasmic membrane), and thus conserves the redox energy in a proton gradient. This subunit may bind ubiquinone. The sequence is that of NADH-quinone oxidoreductase subunit H from Mesorhizobium japonicum (strain LMG 29417 / CECT 9101 / MAFF 303099) (Mesorhizobium loti (strain MAFF 303099)).